We begin with the raw amino-acid sequence, 39 residues long: Fructose 5-dehydrogenase [NADP(+)] (39 aa).

The catalysed reaction is D-fructose + NADP(+) = 5-dehydro-D-fructose + NADPH + H(+). The polypeptide is Fructose 5-dehydrogenase [NADP(+)] (Erwinia citreus).